We begin with the raw amino-acid sequence, 398 residues long: Steroid C26-monooxygenase (398 aa).

C340 is a binding site for heme.

This sequence belongs to the cytochrome P450 family. Heme is required as a cofactor.

It catalyses the reaction cholest-4-en-3-one + 6 reduced [2Fe-2S]-[ferredoxin] + 3 O2 + 5 H(+) = (25R)-3-oxocholest-4-en-26-oate + 6 oxidized [2Fe-2S]-[ferredoxin] + 4 H2O. The enzyme catalyses cholest-4-en-3-one + 2 reduced [2Fe-2S]-[ferredoxin] + O2 + 2 H(+) = (25R)-3-oxocholest-4-en-26-ol + 2 oxidized [2Fe-2S]-[ferredoxin] + H2O. It carries out the reaction (25R)-3-oxocholest-4-en-26-ol + 2 reduced [2Fe-2S]-[ferredoxin] + O2 + 2 H(+) = (25R)-3-oxocholest-4-en-26-al + 2 oxidized [2Fe-2S]-[ferredoxin] + 2 H2O. The catalysed reaction is (25R)-3-oxocholest-4-en-26-al + 2 reduced [2Fe-2S]-[ferredoxin] + O2 + H(+) = (25R)-3-oxocholest-4-en-26-oate + 2 oxidized [2Fe-2S]-[ferredoxin] + H2O. It catalyses the reaction cholesterol + NADPH + O2 + H(+) = 26-hydroxycholesterol + NADP(+) + H2O. The enzyme catalyses 26-hydroxycholesterol + 2 reduced [2Fe-2S]-[ferredoxin] + O2 + 2 H(+) = (3beta)-hydroxy-cholest-5-en-26-al + 2 oxidized [2Fe-2S]-[ferredoxin] + 2 H2O. It carries out the reaction (3beta)-hydroxy-cholest-5-en-26-al + NADPH + O2 = (3beta)-hydroxy-cholest-5-en-26-oate + NADP(+) + H2O. The catalysed reaction is (25S)-3-oxocholest-4-en-26-ol + 2 reduced [2Fe-2S]-[ferredoxin] + O2 + 2 H(+) = (25S)-3-oxocholest-4-en-26-al + 2 oxidized [2Fe-2S]-[ferredoxin] + 2 H2O. It catalyses the reaction (25S)-3-oxocholest-4-en-26-al + 2 reduced [2Fe-2S]-[ferredoxin] + O2 + H(+) = (25S)-3-oxocholest-4-en-26-oate + 2 oxidized [2Fe-2S]-[ferredoxin] + H2O. It participates in steroid metabolism; cholesterol degradation. With respect to regulation, inhibited by econazole, clotrimazole and miconazole. Involved in the utilization of cholesterol as the sole carbon and energy source by degrading the side chain during infection. Primarily catalyzes the sequential oxidation of the terminal methyl of cholest-4-en-3-one into (25R)-26-hydroxycholest-4-en-3-one (alcohol), (25R)-26-oxocholest-4-en-3-one (aldehyde), to finally yield the carboxylic acid (25R)-3-oxocholest-4-en-26-oate. In vitro, Cyp142 catalyzes with equal preference the oxidation of both (25R)- and (25S)-26-hydroxycholest-4-en-3-one diastereomers to the corresponding carboxylic acid which is a prerequisite for entry into the beta-oxidation pathway. Also able to sequentially oxidize cholesterol itself, not only cholest-4-en-3-one. The sequence is that of Steroid C26-monooxygenase (cyp142) from Mycobacterium tuberculosis (strain ATCC 25618 / H37Rv).